The chain runs to 155 residues: MAKNTNITTVADNRKARFSYEVIDTLEAGLVLSGTEVKSLREGHANIQESYAAVEGGEIWLINSHIPEYFAGNRFNHEPRRRRKLLLSKKEMARLAQAVEREGMTMVPLKLYFNERGIAKLLLAIARGKKLHDKRETLKQRDWSREQARLLKERG.

Belongs to the SmpB family.

It localises to the cytoplasm. Its function is as follows. Required for rescue of stalled ribosomes mediated by trans-translation. Binds to transfer-messenger RNA (tmRNA), required for stable association of tmRNA with ribosomes. tmRNA and SmpB together mimic tRNA shape, replacing the anticodon stem-loop with SmpB. tmRNA is encoded by the ssrA gene; the 2 termini fold to resemble tRNA(Ala) and it encodes a 'tag peptide', a short internal open reading frame. During trans-translation Ala-aminoacylated tmRNA acts like a tRNA, entering the A-site of stalled ribosomes, displacing the stalled mRNA. The ribosome then switches to translate the ORF on the tmRNA; the nascent peptide is terminated with the 'tag peptide' encoded by the tmRNA and targeted for degradation. The ribosome is freed to recommence translation, which seems to be the essential function of trans-translation. This chain is SsrA-binding protein, found in Chelativorans sp. (strain BNC1).